Reading from the N-terminus, the 443-residue chain is Xaa-Pro dipeptidase (443 aa).

Mn(2+) contacts are provided by Asp-244, Asp-255, His-339, Glu-384, and Glu-423.

Belongs to the peptidase M24B family. Bacterial-type prolidase subfamily. The cofactor is Mn(2+).

The enzyme catalyses Xaa-L-Pro dipeptide + H2O = an L-alpha-amino acid + L-proline. Functionally, splits dipeptides with a prolyl residue in the C-terminal position. The polypeptide is Xaa-Pro dipeptidase (Pseudoalteromonas atlantica (strain T6c / ATCC BAA-1087)).